Here is a 247-residue protein sequence, read N- to C-terminus: ATP synthase subunit a, chloroplastic (247 aa).

The next 5 helical transmembrane spans lie at 36 to 56 (GQVL…SIFG), 95 to 115 (VPFI…GALV), 134 to 154 (INTT…AGFS), 199 to 219 (LVVG…LMLL), and 220 to 240 (GLFT…AYIG).

The protein belongs to the ATPase A chain family. F-type ATPases have 2 components, CF(1) - the catalytic core - and CF(0) - the membrane proton channel. CF(1) has five subunits: alpha(3), beta(3), gamma(1), delta(1), epsilon(1). CF(0) has four main subunits: a, b, b' and c.

It is found in the plastid. The protein localises to the chloroplast thylakoid membrane. Key component of the proton channel; it plays a direct role in the translocation of protons across the membrane. The chain is ATP synthase subunit a, chloroplastic from Mesostigma viride (Green alga).